We begin with the raw amino-acid sequence, 258 residues long: Shikimate dehydrogenase (NADP(+)) (258 aa).

Shikimate is bound by residues 14–16 (SES) and threonine 61. Lysine 65 (proton acceptor) is an active-site residue. Shikimate-binding residues include asparagine 86 and aspartate 101. NADP(+) is bound by residues 125 to 129 (GSGGS) and leucine 211. Shikimate is bound at residue tyrosine 213. Position 234 (glycine 234) interacts with NADP(+).

This sequence belongs to the shikimate dehydrogenase family. Homodimer.

It carries out the reaction shikimate + NADP(+) = 3-dehydroshikimate + NADPH + H(+). The protein operates within metabolic intermediate biosynthesis; chorismate biosynthesis; chorismate from D-erythrose 4-phosphate and phosphoenolpyruvate: step 4/7. Functionally, involved in the biosynthesis of the chorismate, which leads to the biosynthesis of aromatic amino acids. Catalyzes the reversible NADPH linked reduction of 3-dehydroshikimate (DHSA) to yield shikimate (SA). The protein is Shikimate dehydrogenase (NADP(+)) of Clostridium botulinum (strain ATCC 19397 / Type A).